Here is a 577-residue protein sequence, read N- to C-terminus: Methionine--tRNA ligase (577 aa).

The 'HIGH' region signature appears at 21-31 (PYANGPLHVGH). Residues cysteine 153, cysteine 156, cysteine 166, and cysteine 169 each contribute to the Zn(2+) site. Residues 355 to 359 (QMSTS) carry the 'KMSKS' region motif. Threonine 358 contacts ATP.

Belongs to the class-I aminoacyl-tRNA synthetase family. MetG type 1 subfamily. Monomer. Zn(2+) serves as cofactor.

It is found in the cytoplasm. The catalysed reaction is tRNA(Met) + L-methionine + ATP = L-methionyl-tRNA(Met) + AMP + diphosphate. Functionally, is required not only for elongation of protein synthesis but also for the initiation of all mRNA translation through initiator tRNA(fMet) aminoacylation. The polypeptide is Methionine--tRNA ligase (Rubrobacter xylanophilus (strain DSM 9941 / JCM 11954 / NBRC 16129 / PRD-1)).